The following is a 590-amino-acid chain: Putative ABC transporter ATP-binding protein MM_3016 (590 aa).

2 consecutive ABC transporter domains span residues 11–251 (VRFE…KLGI) and 317–550 (VRIE…AGLI). ATP contacts are provided by residues 45-52 (GPSGCGKS) and 350-357 (GHNGAGKT).

Belongs to the ABC transporter superfamily.

Its subcellular location is the cell membrane. Probably part of an ABC transporter complex. Responsible for energy coupling to the transport system. In Methanosarcina mazei (strain ATCC BAA-159 / DSM 3647 / Goe1 / Go1 / JCM 11833 / OCM 88) (Methanosarcina frisia), this protein is Putative ABC transporter ATP-binding protein MM_3016.